Here is a 102-residue protein sequence, read N- to C-terminus: uncharacterized protein (102 aa).

2 consecutive transmembrane segments (helical) span residues 28 to 48 (YLNL…LISI) and 81 to 101 (LSVL…AGIG).

The protein resides in the membrane. This is an uncharacterized protein from Saccharomyces cerevisiae (strain ATCC 204508 / S288c) (Baker's yeast).